Here is a 347-residue protein sequence, read N- to C-terminus: GMP reductase (347 aa).

108–131 (ADFDKMKQILALSPALKFICIDVA) lines the NADP(+) pocket. K(+) contacts are provided by glycine 181 and glycine 183. Cysteine 186 (thioimidate intermediate) is an active-site residue. 216–239 (IVSDGGCSVPGDVAKAFGGGADFV) contacts NADP(+).

Belongs to the IMPDH/GMPR family. GuaC type 1 subfamily. Homotetramer.

The catalysed reaction is IMP + NH4(+) + NADP(+) = GMP + NADPH + 2 H(+). Its function is as follows. Catalyzes the irreversible NADPH-dependent deamination of GMP to IMP. It functions in the conversion of nucleobase, nucleoside and nucleotide derivatives of G to A nucleotides, and in maintaining the intracellular balance of A and G nucleotides. In Yersinia enterocolitica serotype O:8 / biotype 1B (strain NCTC 13174 / 8081), this protein is GMP reductase.